The chain runs to 675 residues: Heat shock 70 kDa protein, mitochondrial (675 aa).

The N-terminal 52 residues, 1–52, are a transit peptide targeting the mitochondrion; the sequence is MAATLLRSLQRRNLSSSSVSAFRSLTGSTKTSYATHKLASLTRPFSSRPAGN. The disordered stretch occupies residues 639–675; it reads VSKIGQHMSGGSSGGPSEGGSQGGEQAPEAEYEEVKK. The span at 649 to 661 shows a compositional bias: gly residues; it reads GSSGGPSEGGSQG. A compositionally biased stretch (acidic residues) spans 666–675; that stretch reads PEAEYEEVKK.

It belongs to the heat shock protein 70 family.

It localises to the mitochondrion. This chain is Heat shock 70 kDa protein, mitochondrial (HSP1), found in Pisum sativum (Garden pea).